Here is a 250-residue protein sequence, read N- to C-terminus: Cell division protein ZapD (250 aa).

It belongs to the ZapD family. As to quaternary structure, interacts with FtsZ.

It is found in the cytoplasm. Its function is as follows. Cell division factor that enhances FtsZ-ring assembly. Directly interacts with FtsZ and promotes bundling of FtsZ protofilaments, with a reduction in FtsZ GTPase activity. The protein is Cell division protein ZapD of Pectobacterium carotovorum subsp. carotovorum (strain PC1).